The chain runs to 308 residues: D-alanine--D-alanine ligase (308 aa).

An ATP-grasp domain is found at 102–302 (KHVAKAAGIP…FGEFLRWMVE (201 aa)). Residue 128 to 183 (PMKPPYVVKPVREGSSFGVVIVKEDQSHPPQVITSSEWRYGDRVMVERYIAGREFT) coordinates ATP. Residues D252, E269, and N271 each contribute to the Mg(2+) site.

The protein belongs to the D-alanine--D-alanine ligase family. Requires Mg(2+) as cofactor. Mn(2+) serves as cofactor.

The protein localises to the cytoplasm. It catalyses the reaction 2 D-alanine + ATP = D-alanyl-D-alanine + ADP + phosphate + H(+). Its pathway is cell wall biogenesis; peptidoglycan biosynthesis. Its function is as follows. Cell wall formation. The polypeptide is D-alanine--D-alanine ligase (Rhizobium meliloti (strain 1021) (Ensifer meliloti)).